Reading from the N-terminus, the 226-residue chain is Large ribosomal subunit protein uL1 (226 aa).

This sequence belongs to the universal ribosomal protein uL1 family. Part of the 50S ribosomal subunit.

Binds directly to 23S rRNA. The L1 stalk is quite mobile in the ribosome, and is involved in E site tRNA release. Its function is as follows. Protein L1 is also a translational repressor protein, it controls the translation of the L11 operon by binding to its mRNA. The polypeptide is Large ribosomal subunit protein uL1 (Mycoplasmoides gallisepticum (strain R(low / passage 15 / clone 2)) (Mycoplasma gallisepticum)).